The following is a 483-amino-acid chain: tRNA sulfurtransferase (483 aa).

One can recognise a THUMP domain in the interval Pro-62–Arg-166. ATP-binding positions include Leu-184–Ile-185, Lys-266, Gly-288, and Gln-297. Cys-345 and Cys-457 are disulfide-bonded. Residues Leu-405 to Pro-483 form the Rhodanese domain. The Cysteine persulfide intermediate role is filled by Cys-457.

This sequence belongs to the ThiI family.

It is found in the cytoplasm. It catalyses the reaction [ThiI sulfur-carrier protein]-S-sulfanyl-L-cysteine + a uridine in tRNA + 2 reduced [2Fe-2S]-[ferredoxin] + ATP + H(+) = [ThiI sulfur-carrier protein]-L-cysteine + a 4-thiouridine in tRNA + 2 oxidized [2Fe-2S]-[ferredoxin] + AMP + diphosphate. It carries out the reaction [ThiS sulfur-carrier protein]-C-terminal Gly-Gly-AMP + S-sulfanyl-L-cysteinyl-[cysteine desulfurase] + AH2 = [ThiS sulfur-carrier protein]-C-terminal-Gly-aminoethanethioate + L-cysteinyl-[cysteine desulfurase] + A + AMP + 2 H(+). It participates in cofactor biosynthesis; thiamine diphosphate biosynthesis. Catalyzes the ATP-dependent transfer of a sulfur to tRNA to produce 4-thiouridine in position 8 of tRNAs, which functions as a near-UV photosensor. Also catalyzes the transfer of sulfur to the sulfur carrier protein ThiS, forming ThiS-thiocarboxylate. This is a step in the synthesis of thiazole, in the thiamine biosynthesis pathway. The sulfur is donated as persulfide by IscS. The chain is tRNA sulfurtransferase from Yersinia pseudotuberculosis serotype O:1b (strain IP 31758).